A 309-amino-acid chain; its full sequence is Ribonuclease Z (309 aa).

7 residues coordinate Zn(2+): His-63, His-65, Asp-67, His-68, His-141, Asp-212, and His-270. Asp-67 functions as the Proton acceptor in the catalytic mechanism.

It belongs to the RNase Z family. In terms of assembly, homodimer. The cofactor is Zn(2+).

The enzyme catalyses Endonucleolytic cleavage of RNA, removing extra 3' nucleotides from tRNA precursor, generating 3' termini of tRNAs. A 3'-hydroxy group is left at the tRNA terminus and a 5'-phosphoryl group is left at the trailer molecule.. Its function is as follows. Zinc phosphodiesterase, which displays some tRNA 3'-processing endonuclease activity. Probably involved in tRNA maturation, by removing a 3'-trailer from precursor tRNA. This is Ribonuclease Z from Halalkalibacterium halodurans (strain ATCC BAA-125 / DSM 18197 / FERM 7344 / JCM 9153 / C-125) (Bacillus halodurans).